Here is a 2837-residue protein sequence, read N- to C-terminus: Probable polyketide synthase 3 (2837 aa).

One can recognise a Ketosynthase family 3 (KS3) domain in the interval 39–464 (NNGIGIIGIG…GSNVCIILKD (426 aa)). Catalysis depends on for beta-ketoacyl synthase activity residues cysteine 209, histidine 348, and histidine 388. The acyl/malonyl transferase stretch occupies residues 664-697 (GIKPTFIVGHSLGEVTAAYCSGMIDLETECYLIY). Serine 674 (for acyl/malonyl transferase activity) is an active-site residue. Residues 962 to 1084 (IDILGNSITD…GNFQLFKHNG (123 aa)) are N-terminal hotdog fold. Positions 962-1255 (IDILGNSITD…CTSLTPIQDS (294 aa)) constitute a PKS/mFAS DH domain. The active-site Proton acceptor; for dehydratase activity is histidine 995. Residues 1106–1255 (NLTKLTKEDL…CTSLTPIQDS (150 aa)) are C-terminal hotdog fold. Aspartate 1169 functions as the Proton donor; for dehydratase activity in the catalytic mechanism. The Carrier domain occupies 2330–2407 (DNKNSVNQMF…SSIKIITNSL (78 aa)). Serine 2367 bears the O-(pantetheine 4'-phosphoryl)serine mark. Residues 2464-2484 (KVILLSGSTGFLGGYLLLNLV) form a helical membrane-spanning segment.

Pantetheine 4'-phosphate is required as a cofactor.

It is found in the membrane. Probable polyketide synthase. The protein is Probable polyketide synthase 3 (pks3) of Dictyostelium discoideum (Social amoeba).